A 273-amino-acid chain; its full sequence is Dermonecrotic toxin LdSicTox-alphaIB1avi (273 aa).

Residue histidine 5 is part of the active site. Mg(2+)-binding residues include glutamate 25 and aspartate 27. The Nucleophile role is filled by histidine 41. 2 cysteine pairs are disulfide-bonded: cysteine 45-cysteine 51 and cysteine 47-cysteine 190. Aspartate 85 contributes to the Mg(2+) binding site. The N-linked (GlcNAc...) asparagine glycan is linked to asparagine 250.

Belongs to the arthropod phospholipase D family. Class II subfamily. Mg(2+) serves as cofactor. As to expression, expressed by the venom gland.

The protein resides in the secreted. The enzyme catalyses an N-(acyl)-sphingosylphosphocholine = an N-(acyl)-sphingosyl-1,3-cyclic phosphate + choline. The catalysed reaction is an N-(acyl)-sphingosylphosphoethanolamine = an N-(acyl)-sphingosyl-1,3-cyclic phosphate + ethanolamine. It carries out the reaction a 1-acyl-sn-glycero-3-phosphocholine = a 1-acyl-sn-glycero-2,3-cyclic phosphate + choline. It catalyses the reaction a 1-acyl-sn-glycero-3-phosphoethanolamine = a 1-acyl-sn-glycero-2,3-cyclic phosphate + ethanolamine. In terms of biological role, dermonecrotic toxins cleave the phosphodiester linkage between the phosphate and headgroup of certain phospholipids (sphingolipid and lysolipid substrates), forming an alcohol (often choline) and a cyclic phosphate. This toxin acts on sphingomyelin (SM). It may also act on ceramide phosphoethanolamine (CPE), lysophosphatidylcholine (LPC) and lysophosphatidylethanolamine (LPE), but not on lysophosphatidylserine (LPS), and lysophosphatidylglycerol (LPG). It acts by transphosphatidylation, releasing exclusively cyclic phosphate products as second products. Induces dermonecrosis, hemolysis, increased vascular permeability, edema, inflammatory response, and platelet aggregation. This Loxosceles deserta (Desert recluse spider) protein is Dermonecrotic toxin LdSicTox-alphaIB1avi.